A 570-amino-acid chain; its full sequence is MDLFLRLGNVLTEVVTSIFGVTLSEQVLLWNSPKKREYGDFSTAISFLIAKEVRLSLHEVACSIADGLRSFKDLFKNVSVASGGFINVFLTSDTWSEFLAAVSDDAGGYGFSDIGHAVPLNLEFVSANPTGPLHLGHIRGAVLFDIFAELLDKFGFSLTREYYINDAGKQIDLLVYSVFVRFCEQLRKKESDNFPSNCYAGDYIRDIASYLISTFPDSVKDTTELKSFSDTFREVILSLTMDMIKSDLAKLGISYDCYVREKELHEGNYIEKVIAVLDEKGYLDEEELPSPKGKSGDWVERRQKVFLSTKFGDDTNRALQKVDGSWTYFASDVAYHYHKLERGFNHMIVGLGADHAGYVKRLSGVVEALSGGDARIDIKLYNLVNLFRNGKPVKLSKRNGDLITLDDVLESGITVSEIRFAMLTKSSEIVLDFDLDKFVRASYDNPLFYVQYAHARCSSLLRKRGPSAKCDAAMLVEKQELDLMVTLAKLPSLLKVIVVSGEVHKLTFYLHEVAERFHALWNAGMIENKFRFIIEDEPELTNARLILVKAVKNTLASVLKVMKIEPAERM.

The short motif at 127-137 (ANPTGPLHLGH) is the 'HIGH' region element.

Belongs to the class-I aminoacyl-tRNA synthetase family. In terms of assembly, monomer.

It is found in the cytoplasm. It catalyses the reaction tRNA(Arg) + L-arginine + ATP = L-arginyl-tRNA(Arg) + AMP + diphosphate. In Neorickettsia sennetsu (strain ATCC VR-367 / Miyayama) (Ehrlichia sennetsu), this protein is Arginine--tRNA ligase.